A 786-amino-acid chain; its full sequence is Pheromone-regulated membrane protein 10 (786 aa).

Residues 1–28 (MADSGDKDVSKSVRFDKESIESKKRSSV) show a composition bias toward basic and acidic residues. Disordered regions lie at residues 1-65 (MADS…EDGN) and 77-103 (NGGAGLAPGLSKANSNQEKTDLEDNDN). The span at 29-42 (DDSASSYSSSSSGQ) shows a compositional bias: low complexity. 10 helical membrane-spanning segments follow: residues 469–489 (WVCVFLYGFCSAMVTPYAFGG), 491–511 (WINLAITFFMGSCVGMMQFIL), 521–541 (VFEITASIVVSFCGRAFGSIP), 545–565 (ICFGAITQGSLALILPGYIIL), 584–604 (FYAIIYSLFLGFGITLGAALF), 620–640 (PISPWFRFLFVPAFTIGISLI), 645–665 (WTQLPAMVFISCTGYVVTYWS), 675–695 (FTAALASFVIGILGNLYSRIW), 697–717 (GLAVSAMLPAIFVQVPSGIAS), and 751–771 (FGITMIEVSIGISVGLFASTL).

It belongs to the ThrE exporter (TC 2.A.79) family.

It localises to the membrane. This is Pheromone-regulated membrane protein 10 from Candida glabrata (strain ATCC 2001 / BCRC 20586 / JCM 3761 / NBRC 0622 / NRRL Y-65 / CBS 138) (Yeast).